The chain runs to 384 residues: Proteinase K (384 aa).

The N-terminal stretch at 1–15 (MRLSVLLSLLPLALG) is a signal peptide. Positions 16-105 (APAVEQRSEA…IEQDAVVTIN (90 aa)) are excised as a propeptide. Residues 39-104 (KYIVKFKEGS…YIEQDAVVTI (66 aa)) form the Inhibitor I9 domain. Residues 112–384 (PWGLARISST…NLLAYNNYQA (273 aa)) enclose the Peptidase S8 domain. T121 lines the Ca(2+) pocket. A disulfide bridge links C139 with C228. Residues D144 and H174 each act as charge relay system in the active site. Ca(2+)-binding residues include P280, V282, and D305. C283 and C354 are joined by a disulfide. Catalysis depends on S329, which acts as the Charge relay system. D365 is a binding site for Ca(2+).

Belongs to the peptidase S8 family. Ca(2+) is required as a cofactor.

It carries out the reaction Hydrolysis of keratin, and of other proteins with subtilisin-like specificity. Hydrolyzes peptide amides.. In terms of biological role, hydrolyzes keratin at aromatic and hydrophobic residues. In Parengyodontium album (Tritirachium album), this protein is Proteinase K (PROK).